We begin with the raw amino-acid sequence, 311 residues long: Pantothenate kinase (311 aa).

Position 93–100 (93–100) interacts with ATP; the sequence is GSVAVGKS.

Belongs to the prokaryotic pantothenate kinase family.

The protein localises to the cytoplasm. The catalysed reaction is (R)-pantothenate + ATP = (R)-4'-phosphopantothenate + ADP + H(+). Its pathway is cofactor biosynthesis; coenzyme A biosynthesis; CoA from (R)-pantothenate: step 1/5. The protein is Pantothenate kinase (coaA) of Haemophilus influenzae (strain ATCC 51907 / DSM 11121 / KW20 / Rd).